A 457-amino-acid chain; its full sequence is Heme sensor protein HssS (457 aa).

2 helical membrane-spanning segments follow: residues 9–29 (IAIYSITVILFSALISFVLTN) and 164–184 (TFLAVLLMLLLFISISLVIAS). One can recognise an HAMP domain in the interval 186–238 (YSIIRPVKKLKLATERLIDGDFETPIKQTRKDEIGTLQYHFNKMRESLGQVDQ). In terms of domain architecture, Histidine kinase spans 246–456 (NVSHEIKTPL…TFTITLPNNS (211 aa)). A Phosphohistidine; by autocatalysis modification is found at His249.

In terms of processing, autophosphorylated.

The protein localises to the cell membrane. The enzyme catalyses ATP + protein L-histidine = ADP + protein N-phospho-L-histidine.. In terms of biological role, member of the two-component regulatory system HssS/HssR involved in intracellular heme homeostasis and tempering of staphylococcal virulence. HssS functions as a heme sensor histidine kinase which is autophosphorylated at a histidine residue and transfers its phosphate group to an aspartate residue of HssR. HssR/HssS activates the expression of hrtAB, an efflux pump, in response to extracellular heme, hemin, hemoglobin or blood. The sequence is that of Heme sensor protein HssS (hssS) from Staphylococcus aureus (strain USA300).